The primary structure comprises 138 residues: Phosphoribosyl-AMP cyclohydrolase (138 aa).

A Mg(2+)-binding site is contributed by D84. C85 contributes to the Zn(2+) binding site. Residues D86 and D88 each contribute to the Mg(2+) site. Zn(2+) contacts are provided by C102 and C109.

It belongs to the PRA-CH family. As to quaternary structure, homodimer. Mg(2+) is required as a cofactor. It depends on Zn(2+) as a cofactor.

It localises to the cytoplasm. It carries out the reaction 1-(5-phospho-beta-D-ribosyl)-5'-AMP + H2O = 1-(5-phospho-beta-D-ribosyl)-5-[(5-phospho-beta-D-ribosylamino)methylideneamino]imidazole-4-carboxamide. It participates in amino-acid biosynthesis; L-histidine biosynthesis; L-histidine from 5-phospho-alpha-D-ribose 1-diphosphate: step 3/9. Catalyzes the hydrolysis of the adenine ring of phosphoribosyl-AMP. This chain is Phosphoribosyl-AMP cyclohydrolase, found in Burkholderia cenocepacia (strain ATCC BAA-245 / DSM 16553 / LMG 16656 / NCTC 13227 / J2315 / CF5610) (Burkholderia cepacia (strain J2315)).